The following is a 184-amino-acid chain: Uroplakin-2 (184 aa).

The signal sequence occupies residues 1–25; the sequence is MASPLPVRTLPLILILLAVLAPGAS. Positions 26–84 are excised as a propeptide; sequence DFNISSLSGPLSPALTESLLVALPPCHLTGGNATLMVRRANDSKVVKSSFMVPPCRGRR. N-linked (GlcNAc...) asparagine glycosylation is found at Asn28, Asn57, and Asn66. Residues 85–155 lie on the Lumenal side of the membrane; that stretch reads ELVSVVDSGS…IGLGMARTGG (71 aa). A helical transmembrane segment spans residues 156–180; the sequence is MVVITVLLSVAMFLLVVGFITALAL. Over 181–184 the chain is Cytoplasmic; it reads GARK.

It belongs to the uroplakin-2 family. In terms of assembly, interacts with uroplakin-1a (UPK1A). Expressed only in the urothelium. Localizes to urothelial superficial cells.

It is found in the cell membrane. Functionally, component of the asymmetric unit membrane (AUM); a highly specialized biomembrane elaborated by terminally differentiated urothelial cells. May play an important role in regulating the assembly of the AUM. The protein is Uroplakin-2 (UPK2) of Sus scrofa (Pig).